A 594-amino-acid chain; its full sequence is Phostensin (594 aa).

Composition is skewed to basic and acidic residues over residues Glu18–Leu33 and Val109–Ser125. 2 disordered regions span residues Glu18 to Val238 and Val294 to Arg485. Phosphoserine is present on residues Ser126, Ser134, Ser174, and Ser194. 2 stretches are compositionally biased toward basic and acidic residues: residues Gln133–Leu155 and Ser167–Lys190. Thr198 bears the Phosphothreonine mark. Position 224 is a phosphoserine (Ser224). A compositionally biased stretch (acidic residues) spans Glu353–Glu364. The span at Pro403–Pro421 shows a compositional bias: pro residues. The residue at position 412 (Ser412) is a Phosphoserine. An N6-acetyllysine modification is found at Lys437. Position 510 is a phosphoserine (Ser510). Residues Tyr531–Leu577 are disordered. The span at Pro558–Leu571 shows a compositional bias: acidic residues.

Interacts with Protein phosphatase 1 (PP1).

It is found in the cytoplasm. The protein resides in the cytoskeleton. Functionally, may target protein phosphatase 1 to F-actin cytoskeleton. The chain is Phostensin (Ppp1r18) from Mus musculus (Mouse).